The primary structure comprises 688 residues: PTS system glucoside-specific EIICBA component (688 aa).

Residues 3–427 form the PTS EIIC type-1 domain; sequence KKLFGQLQRI…FKLKTPGRED (425 aa). 10 helical membrane-spanning segments follow: residues 12 to 32, 81 to 101, 137 to 157, 182 to 202, 223 to 243, 284 to 304, 315 to 335, 340 to 360, 364 to 384, and 395 to 415; these read IGKALMLPVAILPAAGILLAF, LGLAGGDGVAALAALVGYLIM, LVLGIPTLQTGVFGGIIMGAL, FVPIVTSVVAIATGVVLSFAW, LTTFIFGIIERSLIPFGLHHI, AFTTGKYPFMMFGLPAAAFAI, VVGGLMLSAGLTAFLTGITEP, FLFVAPVLYGIHVLLAGTSFL, LLGVKIGMTFSGGFIDYILYG, and LVIPVGIVYAIVYYFLFDFAI. Residues 438–519 form the PTS EIIB type-1 domain; the sequence is AKLPFDVLDA…AKIMSGEITK (82 aa). Cys-460 acts as the Phosphocysteine intermediate; for EIIB activity in catalysis. The 105-residue stretch at 560–664 folds into the PTS EIIA type-1 domain; it reads DQVFAGKMMG…SIVTPMIITN (105 aa). His-612 serves as the catalytic Tele-phosphohistidine intermediate; for EIIA activity.

The protein localises to the cell membrane. Functionally, the phosphoenolpyruvate-dependent sugar phosphotransferase system (sugar PTS), a major carbohydrate active -transport system, catalyzes the phosphorylation of incoming sugar substrates concomitantly with their translocation across the cell membrane. This system is involved in alpha- and beta-glucoside transport. The polypeptide is PTS system glucoside-specific EIICBA component (glcB) (Staphylococcus aureus (strain bovine RF122 / ET3-1)).